A 61-amino-acid chain; its full sequence is Metallothionein-1 (61 aa).

Residue Met1 is modified to N-acetylmethionine. The tract at residues 1–29 is beta; the sequence is MDPNCSCATGVSCTCADSCKCKECKCTSC. Residues Cys5, Cys7, Cys13, Cys15, Cys19, Cys21, Cys24, Cys26, Cys29, Cys33, Cys34, Cys36, Cys37, Cys41, Cys44, Cys48, Cys50, Cys57, Cys59, and Cys60 each contribute to the a divalent metal cation site. An alpha region spans residues 30-61; the sequence is KKSCCSCCPVGCAKCAQGCVCKGASEKCNCCA.

This sequence belongs to the metallothionein superfamily. Type 1 family.

Metallothioneins have a high content of cysteine residues that bind various heavy metals; these proteins are transcriptionally regulated by both heavy metals and glucocorticoids. The chain is Metallothionein-1 (MT1) from Chlorocebus aethiops (Green monkey).